The sequence spans 157 residues: Ribonuclease H (157 aa).

The RNase H type-1 domain occupies 1-146 (MPDLFAYTDG…ADELARAGMA (146 aa)). Aspartate 9, glutamate 52, aspartate 74, and aspartate 138 together coordinate Mg(2+).

It belongs to the RNase H family. Monomer. Mg(2+) is required as a cofactor.

It localises to the cytoplasm. It catalyses the reaction Endonucleolytic cleavage to 5'-phosphomonoester.. Endonuclease that specifically degrades the RNA of RNA-DNA hybrids. This Ruegeria sp. (strain TM1040) (Silicibacter sp.) protein is Ribonuclease H.